A 202-amino-acid chain; its full sequence is MTIDNLAFEKALYDKGYTYICGVDEAGRGPLAGPVVAAAVIFEKGFYHEDINDSKTLSAKKRETLFELIKQHALAIGVSVVNHEVIDKINILEAARHAMEDAISKLKIKPQYALTDHMDIKGIPYTSIKHGDQLSISIAAASIIAKVTRDKLMVDYDEVYPQYGFKDHKGYGTRKHLEALNLYGVSPIHRKTFAPVAKLLKQ.

An RNase H type-2 domain is found at 18-202 (TYICGVDEAG…FAPVAKLLKQ (185 aa)). A divalent metal cation is bound by residues D24, E25, and D116.

Belongs to the RNase HII family. Requires Mn(2+) as cofactor. The cofactor is Mg(2+).

Its subcellular location is the cytoplasm. The enzyme catalyses Endonucleolytic cleavage to 5'-phosphomonoester.. Its function is as follows. Endonuclease that specifically degrades the RNA of RNA-DNA hybrids. The protein is Ribonuclease HII of Acholeplasma laidlawii (strain PG-8A).